Here is a 182-residue protein sequence, read N- to C-terminus: Biotin carboxyl carrier protein of acetyl-CoA carboxylase (182 aa).

Positions 70-95 (AAPSPSPEPGTSRAADHAVTSSGSQP) are disordered. Positions 104 to 180 (LAEVASPMVG…EYNQPLMRIK (77 aa)) constitute a Biotinyl-binding domain. Lys-146 is modified (N6-biotinyllysine).

As to quaternary structure, homodimer.

It participates in lipid metabolism; fatty acid biosynthesis. Its function is as follows. This protein is a component of the acetyl coenzyme A carboxylase complex; first, biotin carboxylase catalyzes the carboxylation of the carrier protein and then the transcarboxylase transfers the carboxyl group to form malonyl-CoA. This chain is Biotin carboxyl carrier protein of acetyl-CoA carboxylase (accB), found in Nostoc sp. (strain PCC 7120 / SAG 25.82 / UTEX 2576).